The sequence spans 518 residues: Lysine--tRNA ligase (518 aa).

The segment at 1-28 is disordered; sequence MTEPTQPNAAQPDAARPNVAPEMDDNKI. Mg(2+)-binding residues include E428 and E435.

This sequence belongs to the class-II aminoacyl-tRNA synthetase family. As to quaternary structure, homodimer. Mg(2+) is required as a cofactor.

The protein resides in the cytoplasm. It carries out the reaction tRNA(Lys) + L-lysine + ATP = L-lysyl-tRNA(Lys) + AMP + diphosphate. The sequence is that of Lysine--tRNA ligase from Paraburkholderia phytofirmans (strain DSM 17436 / LMG 22146 / PsJN) (Burkholderia phytofirmans).